The primary structure comprises 528 residues: MDLPVVLIADKLAQSTVAALGDQVEVRWVDGPDRTKLLAAVPEADALLVRSATTVDAEVLAAAPKLKIVARAGVGLDNVDVDAATARGVLVVNAPTSNIHSAAEHALALLLAASRQIAEADASLRAHIWKRSSFSGTEIFGKTVGVVGLGRIGQLVAARIAAFGAHVIAYDPYVAPARAAQLGIELMSFDDLLARADFISVHLPKTPETAGLIDKEALAKTKPGVIIVNAARGGLVDEVALADAVRSGHVRAAGLDVFATEPCTDSPLFELSQVVVTPHLGASTAEAQDRAGTDVAESVRLALAGEFVPDAVNVDGGVVNEEVAPWLDLVCKLGVLVAALSDELPASLSVHVRGELASEDVEILRLSALRGLFSTVIEDAVTFVNAPALAAERGVSAEITTGSESPNHRSVVDVRAVASDGSVVNIAGTLSGPQLVQKIVQVNGRNFDLRAQGMNLVIRYVDQPGALGKIGTLLGAAGVNIQAAQLSEDTEGPGATILLRLDQDVPGDVRSAIVAAVSANKLEVVNLS.

Residues 151–152, D171, 230–232, and D256 contribute to the NAD(+) site; these read RI and AAR. Residue R232 is part of the active site. E261 is a catalytic residue. The Proton donor role is filled by H279. 279–282 serves as a coordination point for NAD(+); it reads HLGA. The ACT domain occupies 455 to 528; the sequence is NLVIRYVDQP…ANKLEVVNLS (74 aa).

Belongs to the D-isomer specific 2-hydroxyacid dehydrogenase family.

The enzyme catalyses (2R)-3-phosphoglycerate + NAD(+) = 3-phosphooxypyruvate + NADH + H(+). The catalysed reaction is (R)-2-hydroxyglutarate + NAD(+) = 2-oxoglutarate + NADH + H(+). It participates in amino-acid biosynthesis; L-serine biosynthesis; L-serine from 3-phospho-D-glycerate: step 1/3. Functionally, catalyzes the reversible oxidation of 3-phospho-D-glycerate to 3-phosphonooxypyruvate, the first step of the phosphorylated L-serine biosynthesis pathway. Also catalyzes the reversible oxidation of 2-hydroxyglutarate to 2-oxoglutarate. The polypeptide is D-3-phosphoglycerate dehydrogenase (serA) (Mycobacterium leprae (strain TN)).